The following is a 486-amino-acid chain: MARLTEREARRQQQQHPPQQQQPRACPMSGPEPPAQQSDSMKDLDAIKLFVGQIPRNLEEKDLKPLFEQFGKIYELTVLKDRYTGMHKGCAFLTYCARDSAIKAQTALHEQKTLPGMARPIQVKPADSESRGGDRKLFVGMLSKQQSEEEVTSMFQAFGSIEECSVLRGPDGSSKGCAFVKFSSHAEAQAAIQALHGSQTMPGASSSLVVKFADTDKERTLRRMQQMVGQLGIFTPSLALPISPYSAYAQALMQQQTTVLSTSHGSYLSPSVAFPSCHIQQIGAVNLNGLPAAPITPASGLHSPPVIGTAAVPGLVAPLTNGFPGLVPFPSSHPALDTIYTNSIVPYPAQSPALTVESLHPSFTGVQQYSAIYPTAALTPVTHSTPQPPPILQQREGPEGCNLFIYHLPQEFGDNELTQMFLPFGNIISSKVFMDRATNQSKCFGFVSFDNPSSAQTAIQAMNGFQIGMKRLKVQLKRPKDTTQPY.

Residues 1-11 (MARLTEREARR) are compositionally biased toward basic and acidic residues. The tract at residues 1 to 39 (MARLTEREARRQQQQHPPQQQQPRACPMSGPEPPAQQSD) is disordered. The segment covering 12–24 (QQQQHPPQQQQPR) has biased composition (low complexity). RRM domains lie at 47–128 (IKLF…PADS), 135–215 (RKLF…FADT), and 401–479 (CNLF…LKRP).

Belongs to the CELF/BRUNOL family.

The protein localises to the nucleus. It is found in the cytoplasm. In terms of biological role, RNA-binding protein that may be implicated in the regulation of pre-mRNA alternative splicing. The chain is CUGBP Elav-like family member 5 (celf5) from Xenopus tropicalis (Western clawed frog).